We begin with the raw amino-acid sequence, 206 residues long: Ribosomal RNA small subunit methyltransferase G (206 aa).

S-adenosyl-L-methionine is bound by residues Gly-73, Leu-78, 124–125, and Arg-139; that span reads VE.

The protein belongs to the methyltransferase superfamily. RNA methyltransferase RsmG family.

It is found in the cytoplasm. The catalysed reaction is guanosine(527) in 16S rRNA + S-adenosyl-L-methionine = N(7)-methylguanosine(527) in 16S rRNA + S-adenosyl-L-homocysteine. Specifically methylates the N7 position of guanine in position 527 of 16S rRNA. In Idiomarina loihiensis (strain ATCC BAA-735 / DSM 15497 / L2-TR), this protein is Ribosomal RNA small subunit methyltransferase G.